The primary structure comprises 925 residues: Protein translocase subunit SecA (925 aa).

ATP-binding positions include Gln87, 105–109, and Asp512; that span reads GEGKT. Residues Cys910, Cys912, Cys921, and His922 each coordinate Zn(2+).

This sequence belongs to the SecA family. As to quaternary structure, monomer and homodimer. Part of the essential Sec protein translocation apparatus which comprises SecA, SecYEG and auxiliary proteins SecDF-YajC and YidC. It depends on Zn(2+) as a cofactor.

Its subcellular location is the cell inner membrane. It is found in the cytoplasm. The enzyme catalyses ATP + H2O + cellular proteinSide 1 = ADP + phosphate + cellular proteinSide 2.. Part of the Sec protein translocase complex. Interacts with the SecYEG preprotein conducting channel. Has a central role in coupling the hydrolysis of ATP to the transfer of proteins into and across the cell membrane, serving both as a receptor for the preprotein-SecB complex and as an ATP-driven molecular motor driving the stepwise translocation of polypeptide chains across the membrane. In Psychrobacter sp. (strain PRwf-1), this protein is Protein translocase subunit SecA.